Reading from the N-terminus, the 411-residue chain is 2,3-bisphosphoglycerate-independent phosphoglycerate mutase (411 aa).

The protein belongs to the BPG-independent phosphoglycerate mutase family. A-PGAM subfamily.

It carries out the reaction (2R)-2-phosphoglycerate = (2R)-3-phosphoglycerate. The protein operates within carbohydrate degradation; glycolysis; pyruvate from D-glyceraldehyde 3-phosphate: step 3/5. Catalyzes the interconversion of 2-phosphoglycerate and 3-phosphoglycerate. This Pyrobaculum arsenaticum (strain DSM 13514 / JCM 11321 / PZ6) protein is 2,3-bisphosphoglycerate-independent phosphoglycerate mutase.